Reading from the N-terminus, the 201-residue chain is High mobility group protein homolog 068R (201 aa).

2 DNA-binding regions (HMG box) span residues 70–138 (PKRN…ELEK) and 143–201 (TPSK…KAAK).

This sequence belongs to the IIV-6 401R family.

It is found in the host nucleus. This Invertebrate iridescent virus 3 (IIV-3) protein is High mobility group protein homolog 068R.